Consider the following 642-residue polypeptide: Chaperone protein DnaK (642 aa).

Threonine 200 carries the post-translational modification Phosphothreonine; by autocatalysis. The segment covering 608–618 (QAESQAAGEGQ) has biased composition (low complexity). The disordered stretch occupies residues 608–642 (QAESQAAGEGQPDAGKKDDGNVVDAEFEEVKKDKQ).

The protein belongs to the heat shock protein 70 family.

Its function is as follows. Acts as a chaperone. The sequence is that of Chaperone protein DnaK from Laribacter hongkongensis (strain HLHK9).